Consider the following 162-residue polypeptide: Ecotin (162 aa).

Positions 1-18 (MFVPAVVFAALASTSAWA) are cleaved as a signal peptide. A disulfide bridge links cysteine 70 with cysteine 107.

The protein belongs to the protease inhibitor I11 (ecotin) family. Homodimer.

Its subcellular location is the periplasm. In terms of biological role, general inhibitor of pancreatic serine proteases: inhibits chymotrypsin, trypsin, elastases, factor X, kallikrein as well as a variety of other proteases. The polypeptide is Ecotin (Salmonella choleraesuis (strain SC-B67)).